We begin with the raw amino-acid sequence, 192 residues long: uncharacterized protein (192 aa).

2 helical membrane-spanning segments follow: residues 31–51 (IVET…YVYE) and 119–139 (VPGA…LWEI).

The protein resides in the cell membrane. This is an uncharacterized protein from Thermotoga maritima (strain ATCC 43589 / DSM 3109 / JCM 10099 / NBRC 100826 / MSB8).